The sequence spans 681 residues: Threonine--tRNA ligase (681 aa).

In terms of domain architecture, TGS spans 3–97 (KQIQVTLPDG…EEDVQLALLT (95 aa)). Residues 279-576 (DHRVLGKQLD…LIEHYAGAFP (298 aa)) form a catalytic region. Zn(2+) is bound by residues Cys-372, His-423, and His-553.

The protein belongs to the class-II aminoacyl-tRNA synthetase family. In terms of assembly, homodimer. Requires Zn(2+) as cofactor.

It is found in the cytoplasm. The enzyme catalyses tRNA(Thr) + L-threonine + ATP = L-threonyl-tRNA(Thr) + AMP + diphosphate + H(+). In terms of biological role, catalyzes the attachment of threonine to tRNA(Thr) in a two-step reaction: L-threonine is first activated by ATP to form Thr-AMP and then transferred to the acceptor end of tRNA(Thr). Also edits incorrectly charged L-seryl-tRNA(Thr). The chain is Threonine--tRNA ligase from Acidobacterium capsulatum (strain ATCC 51196 / DSM 11244 / BCRC 80197 / JCM 7670 / NBRC 15755 / NCIMB 13165 / 161).